A 215-amino-acid chain; its full sequence is Interleukin-12 subunit alpha (215 aa).

An N-terminal signal peptide occupies residues 1–22; sequence MCSSRCLLFLATLAFLIHLSLA. 3 disulfide bridges follow: Cys-33–Cys-106, Cys-60–Cys-192, and Cys-81–Cys-119. Asn-89 is a glycosylation site (N-linked (GlcNAc...) asparagine).

The protein belongs to the IL-6 superfamily. Heterodimer with IL12B; disulfide-linked. This heterodimer is known as interleukin IL-12. Heterodimer with EBI3/IL27B; not disulfide-linked. This heterodimer is known as interleukin IL-35. Interacts with NBR1; this interaction promotes IL-12 secretion.

It is found in the secreted. In terms of biological role, heterodimerizes with IL12B to form the IL-12 cytokine or with EBI3/IL27B to form the IL-35 cytokine. IL-12 is primarily produced by professional antigen-presenting cells (APCs) such as B-cells and dendritic cells (DCs) as well as macrophages and granulocytes and regulates T-cell and natural killer-cell responses, induces the production of interferon-gamma (IFN-gamma), favors the differentiation of T-helper 1 (Th1) cells and is an important link between innate resistance and adaptive immunity. Mechanistically, exerts its biological effects through a receptor composed of IL12R1 and IL12R2 subunits. Binding to the receptor results in the rapid tyrosine phosphorylation of a number of cellular substrates including the JAK family kinases TYK2 and JAK2. In turn, recruited STAT4 gets phosphorylated and translocates to the nucleus where it regulates cytokine/growth factor responsive genes. As part of IL-35, plays essential roles in maintaining the immune homeostasis of the liver microenvironment and also functions as an immune-suppressive cytokine. Mediates biological events through unconventional receptors composed of IL12RB2 and gp130/IL6ST heterodimers or homodimers. Signaling requires the transcription factors STAT1 and STAT4, which form a unique heterodimer that binds to distinct DNA sites. This chain is Interleukin-12 subunit alpha (IL12A), found in Sigmodon hispidus (Hispid cotton rat).